The following is a 121-amino-acid chain: Large ribosomal subunit protein bL12 (121 aa).

Belongs to the bacterial ribosomal protein bL12 family. Homodimer. Part of the ribosomal stalk of the 50S ribosomal subunit. Forms a multimeric L10(L12)X complex, where L10 forms an elongated spine to which 2 to 4 L12 dimers bind in a sequential fashion. Binds GTP-bound translation factors.

In terms of biological role, forms part of the ribosomal stalk which helps the ribosome interact with GTP-bound translation factors. Is thus essential for accurate translation. The polypeptide is Large ribosomal subunit protein bL12 (Acinetobacter baylyi (strain ATCC 33305 / BD413 / ADP1)).